Reading from the N-terminus, the 389-residue chain is Heat-inducible transcription repressor HrcA (389 aa).

It belongs to the HrcA family.

In terms of biological role, negative regulator of class I heat shock genes (grpE-dnaK-dnaJ and groELS operons). Prevents heat-shock induction of these operons. The polypeptide is Heat-inducible transcription repressor HrcA (Synechococcus sp. (strain JA-2-3B'a(2-13)) (Cyanobacteria bacterium Yellowstone B-Prime)).